Consider the following 200-residue polypeptide: Inner membrane-spanning protein YciB (200 aa).

6 helical membrane-spanning segments follow: residues Met1–Asn21, Ile37–Ala57, Leu66–Trp86, Leu103–Phe123, Lys136–Trp156, and Phe167–Ile187.

Belongs to the YciB family.

Its subcellular location is the cell inner membrane. Functionally, plays a role in cell envelope biogenesis, maintenance of cell envelope integrity and membrane homeostasis. The chain is Inner membrane-spanning protein YciB from Brucella melitensis biotype 1 (strain ATCC 23456 / CCUG 17765 / NCTC 10094 / 16M).